Here is a 299-residue protein sequence, read N- to C-terminus: Taste receptor type 2 member 1 (299 aa).

The Extracellular segment spans residues 1-9 (MLESHLIIY). Residues 10–30 (FLLAVIQFLLGIFTNGIIVVV) traverse the membrane as a helical segment. Residues 31–55 (NGIDLIKHRKMAPLDLLLSCLAVSR) lie on the Cytoplasmic side of the membrane. A helical transmembrane segment spans residues 56 to 76 (IFLQLFIFYVNVIVIFFIEFI). Over 77–81 (MCSAN) the chain is Extracellular. The helical transmembrane segment at 82–102 (CAILLFVNELELWLATWLGVF) threads the bilayer. The Cytoplasmic portion of the chain corresponds to 103-124 (YCAKVASVRHPLFIWLKMRISK). The chain crosses the membrane as a helical span at residues 125–145 (LVPWMILGSLLYVSMICVFHS). Residues 146–178 (KYAGFMVPHFLRNFFSQNATIQKEDTLAIQIFS) lie on the Extracellular side of the membrane. Asparagine 163 carries N-linked (GlcNAc...) asparagine glycosylation. Residues 179 to 199 (FVAEFSVPLLIFLVAVLLLIF) traverse the membrane as a helical segment. Over 200 to 222 (SLGRHTRQMRNTVAGSRVPGRGA) the chain is Cytoplasmic. Residues 223 to 243 (PISALLSILSFLILYFSHCMI) traverse the membrane as a helical segment. The Extracellular segment spans residues 244–257 (KVFLSSLKFHVRRF). A helical transmembrane segment spans residues 258–278 (IFLFFILVIGIYPSGHSLILI). Topologically, residues 279-299 (LGNPKLKQNAKKFLLHSKCCQ) are cytoplasmic.

Belongs to the G-protein coupled receptor T2R family.

The protein localises to the membrane. Functionally, receptor that may play a role in the perception of bitterness and is gustducin-linked. May play a role in sensing the chemical composition of the gastrointestinal content. The activity of this receptor may stimulate alpha gustducin, mediate PLC-beta-2 activation and lead to the gating of TRPM5. This is Taste receptor type 2 member 1 (TAS2R1) from Pan paniscus (Pygmy chimpanzee).